A 385-amino-acid chain; its full sequence is Acetate kinase (385 aa).

Asparagine 9 contacts Mg(2+). Position 16 (lysine 16) interacts with ATP. Arginine 87 is a substrate binding site. The Proton donor/acceptor role is filled by aspartate 144. ATP contacts are provided by residues 202-206 (HLGSG) and 277-279 (DIR). Residue glutamate 373 coordinates Mg(2+).

It belongs to the acetokinase family. Homodimer. Mg(2+) serves as cofactor. The cofactor is Mn(2+).

The protein resides in the cytoplasm. It catalyses the reaction acetate + ATP = acetyl phosphate + ADP. It participates in metabolic intermediate biosynthesis; acetyl-CoA biosynthesis; acetyl-CoA from acetate: step 1/2. Functionally, catalyzes the formation of acetyl phosphate from acetate and ATP. Can also catalyze the reverse reaction. This chain is Acetate kinase, found in Rickettsia akari (strain Hartford).